Consider the following 108-residue polypeptide: UPF0235 protein RB8260 (108 aa).

The protein belongs to the UPF0235 family.

The sequence is that of UPF0235 protein RB8260 from Rhodopirellula baltica (strain DSM 10527 / NCIMB 13988 / SH1).